The chain runs to 175 residues: 6,7-dimethyl-8-ribityllumazine synthase (175 aa).

5-amino-6-(D-ribitylamino)uracil is bound by residues F24, 58 to 60 (ALE), and 82 to 84 (AVI). 87-88 (ET) contributes to the (2S)-2-hydroxy-3-oxobutyl phosphate binding site. H90 functions as the Proton donor in the catalytic mechanism. Position 115 (N115) interacts with 5-amino-6-(D-ribitylamino)uracil. R129 contributes to the (2S)-2-hydroxy-3-oxobutyl phosphate binding site. The disordered stretch occupies residues 151-175 (LEPEEDDEDEDEEDEDFDDEETDRR). The segment covering 152–175 (EPEEDDEDEDEEDEDFDDEETDRR) has biased composition (acidic residues).

This sequence belongs to the DMRL synthase family.

It carries out the reaction (2S)-2-hydroxy-3-oxobutyl phosphate + 5-amino-6-(D-ribitylamino)uracil = 6,7-dimethyl-8-(1-D-ribityl)lumazine + phosphate + 2 H2O + H(+). It participates in cofactor biosynthesis; riboflavin biosynthesis; riboflavin from 2-hydroxy-3-oxobutyl phosphate and 5-amino-6-(D-ribitylamino)uracil: step 1/2. In terms of biological role, catalyzes the formation of 6,7-dimethyl-8-ribityllumazine by condensation of 5-amino-6-(D-ribitylamino)uracil with 3,4-dihydroxy-2-butanone 4-phosphate. This is the penultimate step in the biosynthesis of riboflavin. In Bordetella petrii (strain ATCC BAA-461 / DSM 12804 / CCUG 43448), this protein is 6,7-dimethyl-8-ribityllumazine synthase.